A 418-amino-acid polypeptide reads, in one-letter code: tRNA-2-methylthio-N(6)-dimethylallyladenosine synthase (418 aa).

Positions Pro2 to Leu118 constitute an MTTase N-terminal domain. The [4Fe-4S] cluster site is built by Cys11, Cys47, Cys81, Cys134, Cys138, and Cys141. The Radical SAM core domain maps to Leu120–Ala352. The TRAM domain maps to Ser354–Lys414.

This sequence belongs to the methylthiotransferase family. MiaB subfamily. Monomer. Requires [4Fe-4S] cluster as cofactor.

The protein resides in the cytoplasm. It catalyses the reaction N(6)-dimethylallyladenosine(37) in tRNA + (sulfur carrier)-SH + AH2 + 2 S-adenosyl-L-methionine = 2-methylsulfanyl-N(6)-dimethylallyladenosine(37) in tRNA + (sulfur carrier)-H + 5'-deoxyadenosine + L-methionine + A + S-adenosyl-L-homocysteine + 2 H(+). Its function is as follows. Catalyzes the methylthiolation of N6-(dimethylallyl)adenosine (i(6)A), leading to the formation of 2-methylthio-N6-(dimethylallyl)adenosine (ms(2)i(6)A) at position 37 in tRNAs that read codons beginning with uridine. The sequence is that of tRNA-2-methylthio-N(6)-dimethylallyladenosine synthase from Dehalococcoides mccartyi (strain ATCC BAA-2266 / KCTC 15142 / 195) (Dehalococcoides ethenogenes (strain 195)).